The primary structure comprises 430 residues: MAANLSRNGPALQEAYVRVVTEKSPTDWALFTYEGNSNDIRVAGTGEGGLEEMVEELNSGKVMYAFCRVKDPNSGLPKFVLINWTGEGVNDVRKGACASHVSTMASFLKGAHVTINARAEEDVEPECIMEKVAKASGANYSFHKESGRFQDVGPQAPVGSVYQKTNAVSEIKRVGKDSFWAKAEKEEENRRLEEKRRAEEAQRQLEQERRERELREAARREQRYQEQGGEASPQRTWEQQQEVVSRNRNEQESAVHPREIFKQKERAMSTTSISSPQPGKLRSPFLQKQLTQPETHFGREPAAAISRPRADLPAEEPAPSTPPCLVQAEEEAVYEEPPEQETFYEQPPLVQQQGAGSEHIDHHIQGQGLSGQGLCARALYDYQAADDTEISFDPENLITGIEVIDEGWWRGYGPDGHFGMFPANYVELIE.

Residues 4-133 (NLSRNGPALQ…EPECIMEKVA (130 aa)) form the ADF-H domain. T26 bears the Phosphothreonine mark. Residues G137 and S160 each carry the phosphoserine modification. At K176 the chain carries N6-acetyllysine. Residues 176 to 231 (KDSFWAKAEKEEENRRLEEKRRAEEAQRQLEQERRERELREAARREQRYQEQGGEA) adopt a coiled-coil conformation. Residues A183 and S232 each carry the phosphoserine modification. Residues 219-283 (RREQRYQEQG…SSPQPGKLRS (65 aa)) are disordered. Residues 233–244 (PQRTWEQQQEVV) are compositionally biased toward polar residues. Basic and acidic residues predominate over residues 245–267 (SRNRNEQESAVHPREIFKQKERA). Residues 268–277 (MSTTSISSPQ) show a composition bias toward polar residues. Residues S269, S272, S275, and S283 each carry the phosphoserine modification. Position 288 is an N6-acetyllysine (K288). At T291 the chain carries Phosphothreonine. Residues Y334 and Y344 each carry the phosphotyrosine modification. Positions 371-430 (GQGLCARALYDYQAADDTEISFDPENLITGIEVIDEGWWRGYGPDGHFGMFPANYVELIE) constitute an SH3 domain.

The protein belongs to the ABP1 family. In terms of assembly, interacts with SHANK2, SHANK3 and SYN1. Interacts with FGD1 and DNM1. Interacts with ANKRD54. Interacts with COBL. Interacts with WASL and WIPF1. Interacts with MAP4K1 and PRAM1. In terms of processing, degraded by caspases during apoptosis.

Its subcellular location is the cytoplasm. It localises to the cytoskeleton. The protein localises to the cell projection. It is found in the lamellipodium. The protein resides in the ruffle. Its subcellular location is the cell cortex. It localises to the cytosol. The protein localises to the synapse. It is found in the perikaryon. The protein resides in the neuron projection. Its subcellular location is the cell membrane. It localises to the cytoplasmic vesicle. The protein localises to the clathrin-coated vesicle membrane. It is found in the golgi apparatus membrane. The protein resides in the podosome. Its subcellular location is the early endosome. It localises to the dendrite. The protein localises to the postsynaptic density. Functionally, adapter protein that binds F-actin and DNM1, and thereby plays a role in receptor-mediated endocytosis. Plays a role in the reorganization of the actin cytoskeleton, formation of cell projections, such as neurites, in neuron morphogenesis and synapse formation via its interaction with WASL and COBL. Does not bind G-actin and promote actin polymerization by itself. Required for the formation of organized podosome rosettes. May act as a common effector of antigen receptor-signaling pathways in leukocytes. Acts as a key component of the immunological synapse that regulates T-cell activation by bridging TCRs and the actin cytoskeleton to gene activation and endocytic processes. In Homo sapiens (Human), this protein is Drebrin-like protein (DBNL).